Here is a 310-residue protein sequence, read N- to C-terminus: Protein translocase subunit SecF (310 aa).

6 consecutive transmembrane segments (helical) span residues 18 to 38 (FFTI…YRGG), 135 to 155 (QAVY…AFRF), 162 to 182 (IVSV…VILA), 188 to 208 (ITIV…TIVL), 240 to 260 (IVTS…GGEV), and 267 to 287 (IMII…APLI).

This sequence belongs to the SecD/SecF family. SecF subfamily. As to quaternary structure, forms a complex with SecD. Part of the essential Sec protein translocation apparatus which comprises SecA, SecYEG and auxiliary proteins SecDF. Other proteins may also be involved.

Its subcellular location is the cell inner membrane. Its function is as follows. Part of the Sec protein translocase complex. Interacts with the SecYEG preprotein conducting channel. SecDF uses the proton motive force (PMF) to complete protein translocation after the ATP-dependent function of SecA. In Endomicrobium trichonymphae, this protein is Protein translocase subunit SecF.